The sequence spans 1445 residues: CD109 antigen (1445 aa).

Positions 1–21 (MQGPPLLTAAHLLCVCTAALA) are cleaved as a signal peptide. N-linked (GlcNAc...) asparagine glycans are attached at residues N68, N118, N247, N279, N365, N419, N513, and N645. A bait region (approximate) region spans residues 593–702 (DKSVNLMNAS…TWIWLDTNMG (110 aa)). The segment at residues 921–924 (CGEQ) is a cross-link (isoglutamyl cysteine thioester (Cys-Gln)). N-linked (GlcNAc...) asparagine glycans are attached at residues N1086 and N1355. A lipid anchor (GPI-anchor amidated alanine) is attached at A1420. Residues 1421 to 1445 (SGSHHHSSVIFIFCFKLLYFMELWL) constitute a propeptide, removed in mature form.

This sequence belongs to the protease inhibitor I39 (alpha-2-macroglobulin) family. In terms of assembly, heterodimer; disulfide-linked. Interacts with TGFB1 and TGFBR1. Forms a heteromeric complex with TGFBR1, TGFBR2 and TGFBR3 in a ligand-independent manner. In terms of processing, N-glycosylated. 2 forms of 150 (p150) and 120 kDa (p120) exist due to proteolytic degradation from a 180 kDa form. Widely expressed with high level in uterus, aorta, heart, lung, trachea, placenta and in fetal heart, kidney, liver, spleen and lung. Expressed by CD34(+) acute myeloid leukemia cell lines, T-cell lines, activated T-lymphoblasts, endothelial cells and activated platelets. Isoform 4 is expressed in placenta. Isoform 1 is expressed in keratinocytes and placenta.

The protein resides in the cell membrane. In terms of biological role, modulates negatively TGFB1 signaling in keratinocytes. This Homo sapiens (Human) protein is CD109 antigen (CD109).